A 380-amino-acid chain; its full sequence is Protein GOLM2 (380 aa).

N-acetylmethionine is present on Met1. The Cytoplasmic segment spans residues 1–14 (MVGFGANRRAGRLP). A helical; Signal-anchor for type II membrane protein membrane pass occupies residues 15–35 (SLVLAVLLVVIAVLAFNYWSI). Residues 35-195 (ISSRHVLLQE…QFLQEQKQEA (161 aa)) are a coiled coil. Topologically, residues 36-380 (SSRHVLLQEE…YGKQRFNDAL (345 aa)) are lumenal. 2 stretches are compositionally biased toward basic and acidic residues: residues 192-212 (KQEAHKFESKGGNELDTDNHA) and 227-247 (KNEEPSSHHIPHGKEQIKRGG). The segment at 192-254 (KQEAHKFESK…RGGDAGMPGI (63 aa)) is disordered. 2 positions are modified to phosphoserine: Ser233 and Ser275. Positions 280–380 (ESHQVISHLP…YGKQRFNDAL (101 aa)) are disordered. Positions 305 to 321 (NHNGNSRTSKQNPSNPL) are enriched in polar residues. The span at 344–380 (ATKDRAGDFHKLKQNDEERELQMDPADYGKQRFNDAL) shows a compositional bias: basic and acidic residues.

It belongs to the GOLM family.

It is found in the membrane. This chain is Protein GOLM2 (GOLM2), found in Bos taurus (Bovine).